We begin with the raw amino-acid sequence, 80 residues long: RNA-binding protein KhpA (80 aa).

Residues 33-80 (GRTVEVHVHPDDLGKVIGRGGRTATALRTLVAGIGGRGIRVDVVDTDQ) form the KH domain.

The protein belongs to the KhpA RNA-binding protein family.

The protein localises to the cytoplasm. In terms of biological role, a probable RNA-binding protein. In Mycobacterium bovis (strain ATCC BAA-935 / AF2122/97), this protein is RNA-binding protein KhpA.